We begin with the raw amino-acid sequence, 206 residues long: MIKNIVFDFGGVIVDIDRDKAVQAFIKLGLADADTRLDKYHQTGIFQELEEGKLSADEFRKQLGDLCGRELTMEETKQAWLGFFNEVDLRKLDYILGLRKSYHVYLLSNTNPFVMSWACSPEFSSEGKPLNDYCDKLYLSYQLGHTKPAPEIFDFMIKDSHVIPSETLFVDDGSSNIHIGKELGFETFQPENGADWRQELTVILNS.

Residue D8 is the Nucleophile of the active site. Mg(2+)-binding residues include D8 and D172.

This sequence belongs to the HAD-like hydrolase superfamily. It depends on Mg(2+) as a cofactor.

It carries out the reaction D-ribitol 1-phosphate + H2O = ribitol + phosphate. It catalyses the reaction D-ribitol 5-phosphate + H2O = ribitol + phosphate. The catalysed reaction is 5-amino-6-(5-phospho-D-ribitylamino)uracil + H2O = 5-amino-6-(D-ribitylamino)uracil + phosphate. It functions in the pathway cofactor biosynthesis; riboflavin biosynthesis; 5-amino-6-(D-ribitylamino)uracil from GTP: step 4/4. Its function is as follows. Catalyzes the dephosphorylation of D-ribitol-5-phosphate and D-ribitol-1-phosphate. Is also able to dephosphorylate 5-amino-6-(5-phospho-D-ribitylamino)uracil, and thus could be involved in the riboflavin biosynthesis pathway. In Bacteroides thetaiotaomicron (strain ATCC 29148 / DSM 2079 / JCM 5827 / CCUG 10774 / NCTC 10582 / VPI-5482 / E50), this protein is D-ribitol-5-phosphate phosphatase.